A 112-amino-acid chain; its full sequence is MAAPQFHRPSTITADNVRALGMRGLVLATNNAQFIMDNSYPHPHGTQGAVREFLRGQAAALTDLGVTHANNTFAPQPMFAGDAAAEWLRPSFGLKRTYSPFVVRDPKTPSTP.

Belongs to the herpesviridae small capsomere-interacting protein family. As to quaternary structure, interacts with the major capsid protein/MCP.

It is found in the virion. The protein localises to the host nucleus. In terms of biological role, participates in the assembly of the infectious particles by decorating the outer surface of the capsid shell and thus forming a layer between the capsid and the tegument. Complexes composed of the major capsid protein and small capsomere-interacting protein/SCP assemble together in the host cytoplasm and are translocated to the nucleus, where they accumulate and participate in capsid assembly. The polypeptide is Small capsomere-interacting protein (Homo sapiens (Human)).